Consider the following 274-residue polypeptide: 2,3,4,5-tetrahydropyridine-2,6-dicarboxylate N-succinyltransferase (274 aa).

Residues arginine 106 and aspartate 143 each coordinate substrate.

It belongs to the transferase hexapeptide repeat family. In terms of assembly, homotrimer.

It is found in the cytoplasm. The catalysed reaction is (S)-2,3,4,5-tetrahydrodipicolinate + succinyl-CoA + H2O = (S)-2-succinylamino-6-oxoheptanedioate + CoA. It participates in amino-acid biosynthesis; L-lysine biosynthesis via DAP pathway; LL-2,6-diaminopimelate from (S)-tetrahydrodipicolinate (succinylase route): step 1/3. This Rickettsia akari (strain Hartford) protein is 2,3,4,5-tetrahydropyridine-2,6-dicarboxylate N-succinyltransferase.